Reading from the N-terminus, the 78-residue chain is DNA-directed RNA polymerase subunit omega (78 aa).

The protein belongs to the RNA polymerase subunit omega family. In terms of assembly, in cyanobacteria the RNAP catalytic core is composed of 2 alpha, 1 beta, 1 beta', 1 gamma and 1 omega subunit. When a sigma factor is associated with the core the holoenzyme is formed, which can initiate transcription.

It catalyses the reaction RNA(n) + a ribonucleoside 5'-triphosphate = RNA(n+1) + diphosphate. Functionally, promotes RNA polymerase assembly. Latches the N- and C-terminal regions of the beta' subunit thereby facilitating its interaction with the beta and alpha subunits. This chain is DNA-directed RNA polymerase subunit omega, found in Nostoc punctiforme (strain ATCC 29133 / PCC 73102).